A 492-amino-acid polypeptide reads, in one-letter code: Probable protein phosphatase 2C 33 (492 aa).

Residues 1–46 (MGSCLSAESRSPRPGSPCSPAFSVRKRKNSKKRPGSRNSSFDYRRE) form a disordered region. Basic residues predominate over residues 24–35 (VRKRKNSKKRPG). Residues 64 to 393 (VACIYTQQGK…DDCAAVCLYL (330 aa)) form the PPM-type phosphatase domain. Positions 100, 101, 338, and 384 each coordinate Mn(2+). Residues 406–468 (SISKLEDGEE…ADNLDSEPGT (63 aa)) are disordered. The span at 412–427 (DGEEEELKATTEDDDA) shows a compositional bias: acidic residues. Positions 441–460 (SGKEIALDESETEKLIKEAD) are enriched in basic and acidic residues.

Belongs to the PP2C family. Requires Mg(2+) as cofactor. It depends on Mn(2+) as a cofactor.

The catalysed reaction is O-phospho-L-seryl-[protein] + H2O = L-seryl-[protein] + phosphate. It carries out the reaction O-phospho-L-threonyl-[protein] + H2O = L-threonyl-[protein] + phosphate. The protein is Probable protein phosphatase 2C 33 (PPC6-1) of Arabidopsis thaliana (Mouse-ear cress).